Here is a 225-residue protein sequence, read N- to C-terminus: UPF0758 protein Ping_0056 (225 aa).

One can recognise an MPN domain in the interval 103-225 (ALTSAAQTKA…CTSFAENGWI (123 aa)). H174, H176, and D187 together coordinate Zn(2+). Positions 174–187 (HNHPSGDPSASEAD) match the JAMM motif motif.

This sequence belongs to the UPF0758 family.

The chain is UPF0758 protein Ping_0056 from Psychromonas ingrahamii (strain DSM 17664 / CCUG 51855 / 37).